The following is a 298-amino-acid chain: ADP/ATP translocase 3 (298 aa).

Methionine 1 carries the N-acetylmethionine modification. Over 1–7 (MTEQAIS) the chain is Mitochondrial intermembrane. Residue threonine 2 is modified to N-acetylthreonine; in ADP/ATP translocase 3, N-terminally processed. One copy of the Solcar 1 repeat lies at 6–98 (ISFAKDFLAG…FAFKDKYKQI (93 aa)). The chain crosses the membrane as a helical span at residues 8 to 37 (FAKDFLAGGIAAAISKTAVAPIERVKLLLQ). Over 38-74 (VQHASKQIAADKQYKGIVDCIVRIPKEQGVLSFWRGN) the chain is Mitochondrial matrix. N6,N6,N6-trimethyllysine is present on lysine 52. A helical membrane pass occupies residues 75–99 (LANVIRYFPTQALNFAFKDKYKQIF). ADP-binding residues include arginine 80 and lysine 92. The Mitochondrial intermembrane segment spans residues 100–109 (LGGVDKHTQF). At lysine 105 the chain carries N6-acetyllysine. The chain crosses the membrane as a helical span at residues 110–130 (WRYFAGNLASGGAAGATSLCF). 2 Solcar repeats span residues 111–201 (RYFA…AKGM) and 212–297 (VSWM…LKKV). Topologically, residues 131 to 178 (VYPLDFARTRLAADVGKSGTEREFRGLGDCLVKITKSDGIRGLYQGFS) are mitochondrial matrix. The helical transmembrane segment at 179 to 199 (VSVQGIIIYRAAYFGVYDTAK) threads the bilayer. The Mitochondrial intermembrane portion of the chain corresponds to 200 to 210 (GMLPDPKNTHI). The chain crosses the membrane as a helical span at residues 211-231 (VVSWMIAQTVTAVAGVVSYPF). Residues 232-273 (DTVRRRMMMQSGRKGADIMYTGTVDCWRKIFRDEGGKAFFKG) lie on the Mitochondrial matrix side of the membrane. Position 235 (arginine 235) interacts with ADP. The tract at residues 235–240 (RRRMMM) is important for transport activity. The Nucleotide carrier signature motif motif lies at 235 to 240 (RRRMMM). N6-acetyllysine is present on lysine 268. The chain crosses the membrane as a helical span at residues 274–291 (AWSNVLRGMGGAFVLVLY). At 292–298 (DELKKVI) the chain is on the mitochondrial intermembrane side.

Belongs to the mitochondrial carrier (TC 2.A.29) family. Monomer. Found in a complex with ARL2, ARL2BP and SLC25A6/ANT3. As to quaternary structure, (Microbial infection) Interacts with influenza A virus PB1-F2 protein. In terms of assembly, (Microbial infection) Interacts with HIV-1 Vpr. Trimethylated by ANTKMT at Lys-52. As to expression, expressed in erythrocytes (at protein level).

The protein resides in the mitochondrion inner membrane. It localises to the membrane. It catalyses the reaction ADP(in) + ATP(out) = ADP(out) + ATP(in). The catalysed reaction is H(+)(in) = H(+)(out). The matrix-open state (m-state) is inhibited by the membrane-permeable bongkrekic acid (BKA). The cytoplasmic-open state (c-state) is inhibited by the membrane-impermeable toxic inhibitor carboxyatractyloside (CATR). Proton transporter activity is inhibited by ADP:ATP antiporter activity. Its function is as follows. ADP:ATP antiporter that mediates import of ADP into the mitochondrial matrix for ATP synthesis, and export of ATP out to fuel the cell. Cycles between the cytoplasmic-open state (c-state) and the matrix-open state (m-state): operates by the alternating access mechanism with a single substrate-binding site intermittently exposed to either the cytosolic (c-state) or matrix (m-state) side of the inner mitochondrial membrane. In addition to its ADP:ATP antiporter activity, also involved in mitochondrial uncoupling and mitochondrial permeability transition pore (mPTP) activity. Plays a role in mitochondrial uncoupling by acting as a proton transporter: proton transport uncouples the proton flows via the electron transport chain and ATP synthase to reduce the efficiency of ATP production and cause mitochondrial thermogenesis. Proton transporter activity is inhibited by ADP:ATP antiporter activity, suggesting that SLC25A6/ANT3 acts as a master regulator of mitochondrial energy output by maintaining a delicate balance between ATP production (ADP:ATP antiporter activity) and thermogenesis (proton transporter activity). Proton transporter activity requires free fatty acids as cofactor, but does not transport it. Also plays a key role in mPTP opening, a non-specific pore that enables free passage of the mitochondrial membranes to solutes of up to 1.5 kDa, and which contributes to cell death. It is however unclear if SLC25A6/ANT3 constitutes a pore-forming component of mPTP or regulates it. This is ADP/ATP translocase 3 from Homo sapiens (Human).